Consider the following 92-residue polypeptide: RIIa domain-containing protein 1 (92 aa).

In terms of domain architecture, RIIa spans 43 to 77 (KEVELLISGFFREMFLKRPDNIPEFAADYFTDPRL).

The polypeptide is RIIa domain-containing protein 1 (RIIAD1) (Bos taurus (Bovine)).